The following is a 315-amino-acid chain: Protein TIFY 4B (315 aa).

The tract at residues 113 to 145 (CHRRDSPRSAEFSGSSGQFVADKDSHKTVSVSP) is disordered. One can recognise a Tify domain in the interval 151–186 (TNAVVGQMTIFYSGKVNVYDGVPPEKARSIMHFAAN). The short motif at 233-260 (QANRKVSLQRYLEKRKDRRFSKTKKAPG) is the Jas element. The Nuclear localization signal motif lies at 235–242 (NRKVSLQR). Positions 248–257 (KDRRFSKTKK) are enriched in basic residues. Residues 248 to 315 (KDRRFSKTKK…LNSDLNSEDN (68 aa)) form a disordered region. Positions 293-315 (PENQTKSPNISVDLNSDLNSEDN) are enriched in polar residues.

The protein belongs to the TIFY/JAZ family. In terms of assembly, interacts with AFPH2/NINJA.

It is found in the nucleus. In terms of biological role, regulates the arrest of dispersed meristematic cells during lamina development. The polypeptide is Protein TIFY 4B (TIFY4B) (Arabidopsis thaliana (Mouse-ear cress)).